The chain runs to 237 residues: Cobalt-precorrin-2 C(20)-methyltransferase (237 aa).

Belongs to the precorrin methyltransferase family. As to quaternary structure, homodimer.

It carries out the reaction Co-precorrin-2 + S-adenosyl-L-methionine = Co-precorrin-3 + S-adenosyl-L-homocysteine + H(+). The protein operates within cofactor biosynthesis; adenosylcobalamin biosynthesis; cob(II)yrinate a,c-diamide from sirohydrochlorin (anaerobic route): step 2/10. Its function is as follows. Methylates cobalt-precorrin-2 at the C-20 position to produce cobalt-precorrin-3A in the anaerobic cobalamin biosynthesis pathway. The protein is Cobalt-precorrin-2 C(20)-methyltransferase (cbiL) of Salmonella typhimurium (strain LT2 / SGSC1412 / ATCC 700720).